Consider the following 137-residue polypeptide: Large ribosomal subunit protein uL16 (137 aa).

The protein belongs to the universal ribosomal protein uL16 family. Part of the 50S ribosomal subunit.

Functionally, binds 23S rRNA and is also seen to make contacts with the A and possibly P site tRNAs. The polypeptide is Large ribosomal subunit protein uL16 (Leptospira biflexa serovar Patoc (strain Patoc 1 / Ames)).